Consider the following 86-residue polypeptide: Kappa-theraphotoxin-Cg1a 6 (86 aa).

Residues 1–21 form the signal peptide; that stretch reads MKVSVLITLAVLGVMFVWASA. Positions 22-50 are excised as a propeptide; sequence AELEERGSDQRDSPAWLKSMERIFQSEER. 3 cysteine pairs are disulfide-bonded: C52-C66, C59-C71, and C65-C78. F84 carries the post-translational modification Phenylalanine amide.

It belongs to the neurotoxin 10 (Hwtx-1) family. 28 (Jztx-11) subfamily. As to expression, expressed by the venom gland.

Its subcellular location is the secreted. Functionally, this toxin acts as a voltage-dependent gating-modifier. It inhibits the sodium conductance (IC(50)=124 nM) and slows the fast inactivation (EC(50)=1180 nM) of Nav1.5/SCN5A. It significantly shifts the activation to more depolarized voltages and decreases the deactivation of Nav1.5 currents upon extreme depolarization, but only slightly affects voltage-dependence of steady-state inactivation. In addition, this toxin causes an approximately five-fold decrease in the rate of recovery from inactivation and an approximately 1.9-fold reduction in the closed-state inactivation rate. This toxin integrates the functions of site 3 toxins (alpha-scorpion toxins) with site 4 toxins (beta-scorpion and spider toxins) by targeting multiple sites on Nav1.5. Also shows inhibition of voltage-gated potassium channels (5 uM completely inhibits Kv2.1/KCNB1, whereas 5 uM moderately inhibits Kv4.2/KCND2 Kv4.1/KCND1 channels). The sequence is that of Kappa-theraphotoxin-Cg1a 6 from Chilobrachys guangxiensis (Chinese earth tiger tarantula).